A 350-amino-acid chain; its full sequence is Holliday junction branch migration complex subunit RuvB (350 aa).

A large ATPase domain (RuvB-L) region spans residues 1-183; that stretch reads MSAERLVNPH…FVAVHRLVFY (183 aa). Residues L22, R23, G64, K67, T68, S69, 130–132, R173, Y183, and R220 contribute to the ATP site; that span reads EDF. T68 is a Mg(2+) binding site. Residues 184 to 254 are small ATPAse domain (RuvB-S); it reads SDDAMTEIVS…VARDALAQLE (71 aa). A head domain (RuvB-H) region spans residues 257–350; sequence ELGLDENDRR…ESGPQQATLF (94 aa). DNA is bound by residues R312 and R317. Positions 331–350 are disordered; sequence YPERTLPADDESGPQQATLF.

This sequence belongs to the RuvB family. Homohexamer. Forms an RuvA(8)-RuvB(12)-Holliday junction (HJ) complex. HJ DNA is sandwiched between 2 RuvA tetramers; dsDNA enters through RuvA and exits via RuvB. An RuvB hexamer assembles on each DNA strand where it exits the tetramer. Each RuvB hexamer is contacted by two RuvA subunits (via domain III) on 2 adjacent RuvB subunits; this complex drives branch migration. In the full resolvosome a probable DNA-RuvA(4)-RuvB(12)-RuvC(2) complex forms which resolves the HJ.

The protein resides in the cytoplasm. The enzyme catalyses ATP + H2O = ADP + phosphate + H(+). The RuvA-RuvB-RuvC complex processes Holliday junction (HJ) DNA during genetic recombination and DNA repair, while the RuvA-RuvB complex plays an important role in the rescue of blocked DNA replication forks via replication fork reversal (RFR). RuvA specifically binds to HJ cruciform DNA, conferring on it an open structure. The RuvB hexamer acts as an ATP-dependent pump, pulling dsDNA into and through the RuvAB complex. RuvB forms 2 homohexamers on either side of HJ DNA bound by 1 or 2 RuvA tetramers; 4 subunits per hexamer contact DNA at a time. Coordinated motions by a converter formed by DNA-disengaged RuvB subunits stimulates ATP hydrolysis and nucleotide exchange. Immobilization of the converter enables RuvB to convert the ATP-contained energy into a lever motion, pulling 2 nucleotides of DNA out of the RuvA tetramer per ATP hydrolyzed, thus driving DNA branch migration. The RuvB motors rotate together with the DNA substrate, which together with the progressing nucleotide cycle form the mechanistic basis for DNA recombination by continuous HJ branch migration. Branch migration allows RuvC to scan DNA until it finds its consensus sequence, where it cleaves and resolves cruciform DNA. The protein is Holliday junction branch migration complex subunit RuvB of Chloroflexus aurantiacus (strain ATCC 29366 / DSM 635 / J-10-fl).